Consider the following 88-residue polypeptide: Small ribosomal subunit protein bS20 (88 aa).

Positions 1-27 (MANTPQAKKRARQNEKARKHNASMRSM) are disordered. Over residues 7 to 22 (AKKRARQNEKARKHNA) the composition is skewed to basic residues.

Belongs to the bacterial ribosomal protein bS20 family.

In terms of biological role, binds directly to 16S ribosomal RNA. This is Small ribosomal subunit protein bS20 from Cellvibrio japonicus (strain Ueda107) (Pseudomonas fluorescens subsp. cellulosa).